Reading from the N-terminus, the 316-residue chain is Olfactory receptor 5P79 (316 aa).

At Met-1–Val-28 the chain is on the extracellular side. A glycan (N-linked (GlcNAc...) asparagine) is linked at Asn-8. The chain crosses the membrane as a helical span at residues Val-29–Ile-49. Residues Leu-50–Gln-57 are Cytoplasmic-facing. A helical transmembrane segment spans residues Leu-58–Ser-78. Over Ser-79 to Ile-102 the chain is Extracellular. Cys-100 and Cys-192 are joined by a disulfide. Residues Gln-103–Tyr-123 form a helical membrane-spanning segment. Residues Asp-124–Ser-136 are Cytoplasmic-facing. Residues Thr-137–Leu-157 form a helical membrane-spanning segment. Over Asn-158–Leu-199 the chain is Extracellular. The chain crosses the membrane as a helical span at residues Ile-200 to Ser-220. Residues Tyr-221–Ala-240 are Cytoplasmic-facing. Residues Phe-241 to Ile-261 form a helical membrane-spanning segment. The Extracellular portion of the chain corresponds to Tyr-262–Asn-274. Residues Lys-275–Leu-297 traverse the membrane as a helical segment. The Cytoplasmic segment spans residues Arg-298–Ser-316.

It belongs to the G-protein coupled receptor 1 family.

It is found in the cell membrane. Functionally, potential odorant receptor. This chain is Olfactory receptor 5P79, found in Mus musculus (Mouse).